Consider the following 178-residue polypeptide: Protein modigliani (178 aa).

In terms of assembly, probably homodimerizes. Component of the MTV complex, composed of moi/modigliani, tea and ver/verrocchio. Interacts with ver/verrochio and tea (via C-terminus); the interactions are direct and require fully intact moi/modigliani and ver/verrocchio. The MTV complex is recruited to telomeres by the HipHop-HOAP complex, consisting of HipHop, cav/HOAP and Su(var)205/HP1 to form the terminin telomere-capping complex. Interacts with cav/HOAP and Su(var)205/HP1; the interactions are direct. Probably interacts with peo (via N-terminus and UBC domain).

It is found in the nucleus. Its subcellular location is the chromosome. The protein resides in the telomere. Part of the MTV complex that associates with the HipHop-HOAP complex to form the terminin telomere-capping complex involved in telomere maintenance and prevention of telomere fusion. Potentially functions downstream of mei-41/ATR. As part of the MTV complex binds single stranded DNA in a sequence-independent manner, protecting it from degradation. This Drosophila melanogaster (Fruit fly) protein is Protein modigliani.